The following is a 294-amino-acid chain: MHPRFQTAFAQLADNLQSALEPILADKYFPALLTGEQVSSLKSATGLDEDALAFALLPLAAACARTPLSNFNVGAIARGVSGTWYFGANMEFIGATMQQTVHAEQSAISHAWLSGEKALAAITVNYTPCGHCRQFMNELNSGLDLRIHLPGREAHALRDYLPDAFGPKDLEIKTLLMDEQDHGYALTGDALSQAAIAAANRSHMPYSKSPSGVALECKDGRIFSGSYAENAAFNPTLPPLQGALILLNLKGYDYPDIQRAVLAENADAPLIQWDATSATLKALGCHSIDRVLLA.

CMP/dCMP-type deaminase domains are found at residues 48-168 (DEDA…FGPK) and 186-294 (LTGD…VLLA). 89–91 (NME) contributes to the substrate binding site. His-102 lines the Zn(2+) pocket. Residue Glu-104 is the Proton donor of the active site. Residues Cys-129 and Cys-132 each contribute to the Zn(2+) site.

The protein belongs to the cytidine and deoxycytidylate deaminase family. In terms of assembly, homodimer. Zn(2+) is required as a cofactor.

The catalysed reaction is cytidine + H2O + H(+) = uridine + NH4(+). It catalyses the reaction 2'-deoxycytidine + H2O + H(+) = 2'-deoxyuridine + NH4(+). In terms of biological role, this enzyme scavenges exogenous and endogenous cytidine and 2'-deoxycytidine for UMP synthesis. The polypeptide is Cytidine deaminase (Escherichia coli O139:H28 (strain E24377A / ETEC)).